We begin with the raw amino-acid sequence, 395 residues long: uncharacterized protein (395 aa).

4 disordered regions span residues methionine 1–serine 121, methionine 136–asparagine 187, glutamine 308–glutamate 335, and isoleucine 365–aspartate 395. Residues proline 13–glutamine 28 are compositionally biased toward basic and acidic residues. Basic residues predominate over residues lysine 64 to serine 73. The segment covering serine 97–glutamate 111 has biased composition (basic and acidic residues). Polar residues predominate over residues threonine 144–asparagine 164. Residues lysine 170 to glycine 179 are compositionally biased toward basic residues. The segment covering isoleucine 365–lysine 377 has biased composition (basic residues). Basic and acidic residues predominate over residues lysine 378–aspartate 395.

This is an uncharacterized protein from Caenorhabditis elegans.